A 421-amino-acid chain; its full sequence is Phosphatidate cytidylyltransferase 1 (421 aa).

Residue Met1 is modified to N-acetylmethionine. Residues 1-12 (MEEENVTSSPST) show a composition bias toward polar residues. Residues 1-26 (MEEENVTSSPSTPVHRLRHRRRSNEV) form a disordered region. A run of 8 helical transmembrane segments spans residues 60–80 (IGGFVLVVYMGHLYITAMVVV), 102–122 (LPYIKQLNWHFFFTAMLFVYG), 149–169 (YHMAICYLLYIIGFMWFILTL), 183–203 (WTHMILIVVFTQSSFTVANIF), 206–226 (IFWFLLPASLIIINDIFAYIF), 246–266 (GFIGASVTTIISAFVLANILG), 321–341 (LCLGLFASIIAPFGGFFASGF), and 369–389 (VMAVFAYIYLQSFIVSQSVSV).

Belongs to the CDS family. Mg(2+) is required as a cofactor.

The protein resides in the membrane. The enzyme catalyses a 1,2-diacyl-sn-glycero-3-phosphate + CTP + H(+) = a CDP-1,2-diacyl-sn-glycerol + diphosphate. It functions in the pathway phospholipid metabolism; CDP-diacylglycerol biosynthesis; CDP-diacylglycerol from sn-glycerol 3-phosphate: step 3/3. May be involved in the synthesis of minor phospholipids and in modulation of IP3-mediated signal transduction. This chain is Phosphatidate cytidylyltransferase 1, found in Arabidopsis thaliana (Mouse-ear cress).